The primary structure comprises 429 residues: GTPase Obg (429 aa).

Positions Met1–Ile158 constitute an Obg domain. Residues Ala159–Lys330 enclose the OBG-type G domain. GTP is bound by residues Gly165 to Ser172, Phe190 to Ser194, Asp211 to Gly214, Asn281 to Asp284, and Ser311 to Phe313. Mg(2+) is bound by residues Ser172 and Thr192. Positions Lys351–Asn429 constitute an OCT domain.

This sequence belongs to the TRAFAC class OBG-HflX-like GTPase superfamily. OBG GTPase family. As to quaternary structure, monomer. Mg(2+) is required as a cofactor.

The protein resides in the cytoplasm. An essential GTPase which binds GTP, GDP and possibly (p)ppGpp with moderate affinity, with high nucleotide exchange rates and a fairly low GTP hydrolysis rate. Plays a role in control of the cell cycle, stress response, ribosome biogenesis and in those bacteria that undergo differentiation, in morphogenesis control. In Malacoplasma penetrans (strain HF-2) (Mycoplasma penetrans), this protein is GTPase Obg.